A 435-amino-acid polypeptide reads, in one-letter code: Maltodextrin transport system permease protein MdxF (435 aa).

The next 8 helical transmembrane spans lie at 35 to 55 (LLFLAITGLFAFELCVFGIQA), 73 to 93 (FMLIEGTLQLIVTMIFLMFYI), 136 to 156 (AYIMMVFVIIFPVLVTLFVAL), 199 to 219 (VIWTICATTLQIILGIVTALF), 234 to 254 (IFLFPWAVPAFITIMSFSNMF), 293 to 313 (LIMIQTWLGFPYIYVMVTGVL), 337 to 357 (HITFPMILFATAPVMITQYTF), and 403 to 423 (VAAAVTLLISFIVIGISLIAF). In terms of domain architecture, ABC transmembrane type-1 spans 195–422 (LGWTVIWTIC…FIVIGISLIA (228 aa)).

It belongs to the binding-protein-dependent transport system permease family. MalFG subfamily. As to quaternary structure, the complex is composed of two ATP-binding proteins (MsmX), two transmembrane proteins (MdxF and MdxG) and a solute-binding protein (MdxE).

It is found in the cell membrane. In terms of biological role, part of the ABC transporter complex involved in maltodextrin import. Probably responsible for the translocation of the substrate across the membrane. The sequence is that of Maltodextrin transport system permease protein MdxF (mdxF) from Bacillus subtilis (strain 168).